The following is a 560-amino-acid chain: NAD(P)H-quinone oxidoreductase chain 4-3 (560 aa).

The next 14 helical transmembrane spans lie at 5–25, 35–55, 86–106, 114–134, 135–155, 168–188, 208–228, 242–262, 273–293, 310–330, 331–351, 374–394, 417–437, and 488–508; these read FPWL…IPLL, WYAL…FWHH, ISMP…LAAW, LFYF…VAQD, LLLF…LVSI, FLLY…AMAL, ALEL…LAIF, SAPV…YGLI, HIYF…YGGL, VSHM…GVSG, AMLQ…LAGV, VFAL…MSGF, VMVF…LSML, and VFIA…PKIA.

Belongs to the complex I subunit 4 family.

Its subcellular location is the cellular thylakoid membrane. The enzyme catalyses a plastoquinone + NADH + (n+1) H(+)(in) = a plastoquinol + NAD(+) + n H(+)(out). The catalysed reaction is a plastoquinone + NADPH + (n+1) H(+)(in) = a plastoquinol + NADP(+) + n H(+)(out). NDH-1 shuttles electrons from NAD(P)H, via FMN and iron-sulfur (Fe-S) centers, to quinones in the respiratory chain. The immediate electron acceptor for the enzyme in this species is believed to be plastoquinone. Couples the redox reaction to proton translocation (for every two electrons transferred, four hydrogen ions are translocated across the cytoplasmic membrane), and thus conserves the redox energy in a proton gradient. In Nostoc sp. (strain PCC 7120 / SAG 25.82 / UTEX 2576), this protein is NAD(P)H-quinone oxidoreductase chain 4-3 (ndhD3).